We begin with the raw amino-acid sequence, 437 residues long: Trigger factor (437 aa).

The PPIase FKBP-type domain occupies 161 to 246; that stretch reads DDQVNIDFVG…VNSVSAPQLP (86 aa).

The protein belongs to the FKBP-type PPIase family. Tig subfamily.

Its subcellular location is the cytoplasm. The catalysed reaction is [protein]-peptidylproline (omega=180) = [protein]-peptidylproline (omega=0). In terms of biological role, involved in protein export. Acts as a chaperone by maintaining the newly synthesized protein in an open conformation. Functions as a peptidyl-prolyl cis-trans isomerase. This is Trigger factor from Pseudomonas putida (strain W619).